The chain runs to 391 residues: Multidrug resistance protein MdtL (391 aa).

A run of 12 helical transmembrane segments spans residues 4–24, 42–62, 69–89, 93–113, 131–151, 158–178, 203–222, 245–265, 269–289, 293–313, 331–351, and 356–376; these read FLIC…MYLV, IAFS…GKVA, PVAI…SLAE, LFLA…VVAF, LLNG…HLIM, SLFW…LFIL, FFLS…LTFV, ALTA…LGIF, TLMI…AVSP, VSLF…GVAM, LGIA…VVGI, and MLIG…MFVA.

The protein belongs to the major facilitator superfamily. DHA1 family. MdtL (TC 2.A.1.2.22) subfamily.

Its subcellular location is the cell inner membrane. Its function is as follows. Confers resistance to chloramphenicol. The chain is Multidrug resistance protein MdtL from Escherichia coli (strain 55989 / EAEC).